The following is a 522-amino-acid chain: 2-isopropylmalate synthase (522 aa).

Residues 5-267 enclose the Pyruvate carboxyltransferase domain; it reads VIIFDTTLRD…ETGINAKEIH (263 aa). Mn(2+)-binding residues include Asp14, His202, His204, and Asn238. Residues 392–522 are regulatory domain; sequence QLQQLVVQSD…MHKNRELGGV (131 aa).

It belongs to the alpha-IPM synthase/homocitrate synthase family. LeuA type 1 subfamily. Homodimer. Requires Mn(2+) as cofactor.

The protein localises to the cytoplasm. The catalysed reaction is 3-methyl-2-oxobutanoate + acetyl-CoA + H2O = (2S)-2-isopropylmalate + CoA + H(+). It functions in the pathway amino-acid biosynthesis; L-leucine biosynthesis; L-leucine from 3-methyl-2-oxobutanoate: step 1/4. Its function is as follows. Catalyzes the condensation of the acetyl group of acetyl-CoA with 3-methyl-2-oxobutanoate (2-ketoisovalerate) to form 3-carboxy-3-hydroxy-4-methylpentanoate (2-isopropylmalate). The protein is 2-isopropylmalate synthase of Shewanella sp. (strain MR-4).